A 375-amino-acid chain; its full sequence is Outer membrane porin C (375 aa).

Residues 1–21 form the signal peptide; sequence MKVKVLSLLVPALLVAGAANA. Topologically, residues 22–33 are periplasmic; that stretch reads AEVYNKDGNKLD. Residues 34-42 traverse the membrane as a beta stranded segment; sequence LYGKVDGLH. Over 43 to 53 the chain is Extracellular; that stretch reads YFSDDKSVDGD. The beta stranded transmembrane segment at 54–63 threads the bilayer; it reads QTYMRLGFKG. Over 64–73 the chain is Periplasmic; sequence ETQVTDQLTG. Residues 74–84 form a beta stranded membrane-spanning segment; sequence YGQWEYQIQGN. Over 85 to 91 the chain is Extracellular; it reads APESENN. A beta stranded transmembrane segment spans residues 92–101; the sequence is SWTRVAFAGL. The Periplasmic portion of the chain corresponds to 102 to 106; it reads KFQDI. A beta stranded transmembrane segment spans residues 107–115; sequence GSFDYGRNY. The Extracellular portion of the chain corresponds to 116–141; that stretch reads GVVYDVTSWTDVLPEFGGDTYGSDNF. The chain crosses the membrane as a beta stranded span at residues 142–154; sequence MQQRGNGFATYRN. Over 155-163 the chain is Periplasmic; sequence TDFFGLVDG. A beta stranded transmembrane segment spans residues 164-171; sequence LNFAVQYQ. Residues 172-204 lie on the Extracellular side of the membrane; that stretch reads GQNGSVSGENDPDFTGHGITNNGRKALRQNGDG. The beta stranded transmembrane segment at 205–211 threads the bilayer; that stretch reads VGGSITY. At 212-215 the chain is on the periplasmic side; that stretch reads DYEG. Residues 216–223 form a beta stranded membrane-spanning segment; sequence FGVGAAVS. Topologically, residues 224–245 are extracellular; that stretch reads SSKRTDAQNTAAYIGNGDRAET. Residues 246-252 form a beta stranded membrane-spanning segment; it reads YTGGLKY. Residues 253-256 are Periplasmic-facing; the sequence is DANN. A beta stranded transmembrane segment spans residues 257–264; the sequence is IYLAAQYT. Over 265 to 273 the chain is Extracellular; that stretch reads QTYNATRVG. The chain crosses the membrane as a beta stranded span at residues 274-290; it reads SLGWANKAQNFEAVAQY. At 291 to 295 the chain is on the periplasmic side; that stretch reads QFDFG. Residues 296–303 traverse the membrane as a beta stranded segment; the sequence is LRPSVAYL. At 304-326 the chain is on the extracellular side; the sequence is QSKGKNLGTIGTRNYDDEDILKY. A beta stranded transmembrane segment spans residues 327 to 334; it reads VDVGATYY. Residues 335-338 lie on the Periplasmic side of the membrane; that stretch reads FNKN. The beta stranded transmembrane segment at 339–346 threads the bilayer; it reads MSTYVDYK. The Extracellular portion of the chain corresponds to 347–366; sequence INLLDDNQFTRDAGINTDNI. The chain crosses the membrane as a beta stranded span at residues 367–374; the sequence is VALGLVYQ. A topological domain (periplasmic) is located at residue F375.

The protein belongs to the Gram-negative porin family. In terms of assembly, homotrimer. Forms mixed heterotrimers with OmpF; other mixed heterotrimers are also probable.

Its subcellular location is the cell outer membrane. Forms pores that allow passive diffusion of small molecules across the outer membrane. In terms of biological role, (Microbial infection) Supports colicin E5 entry in the absence of its major receptor OmpF. Its function is as follows. (Microbial infection) A mixed OmpC-OmpF heterotrimer is the outer membrane receptor for toxin CdiA-EC536. This chain is Outer membrane porin C (ompC), found in Escherichia coli O6:K15:H31 (strain 536 / UPEC).